A 184-amino-acid polypeptide reads, in one-letter code: Chaperone protein dnaJ 72 (184 aa).

The region spanning 3-73 (DHYQVLGVTR…LKRASYNAGS (71 aa)) is the J domain. The chain crosses the membrane as a helical span at residues 133-150 (FLLNLALAGGLYFAFTAI).

Belongs to the DnaJ family. C/III subfamily.

It is found in the membrane. Its function is as follows. Plays a continuous role in plant development probably in the structural organization of compartments. The sequence is that of Chaperone protein dnaJ 72 (ATJ72) from Arabidopsis thaliana (Mouse-ear cress).